Reading from the N-terminus, the 487-residue chain is Sorting nexin-4 (487 aa).

The tract at residues 1–59 is disordered; the sequence is MDHDDFDSVSWRHGPDSDISRPTTSGTDTAESPETRRDPNGKRRMSSASEIPQAGPHAD. Positions 20 to 32 are enriched in polar residues; the sequence is SRPTTSGTDTAES. Residues 70 to 192 form the PX domain; that stretch reads VLECRVDTPI…IFLESPDWNA (123 aa). Arg-113, Thr-115, Lys-139, and Arg-158 together coordinate a 1,2-diacyl-sn-glycero-3-phospho-(1D-myo-inositol-3-phosphate). A coiled-coil region spans residues 395–430; that stretch reads EQSRRERMRKLELRIDELTREVESAKTTSEMFDEEV.

It belongs to the sorting nexin family.

Its subcellular location is the cytoplasm. The protein resides in the cytosol. The protein localises to the preautophagosomal structure membrane. It localises to the endosome membrane. Sorting nexin, involved in the separation or division of vacuoles throughout the entire life cycle of the cells. Involved in retrieval of late-Golgi SNAREs from post-Golgi endosomes to the trans-Golgi network, for cytoplasm to vacuole transport (Cvt), and autophagy of large cargos including mitophagy, pexophagy and glycophagy. The polypeptide is Sorting nexin-4 (snx4) (Emericella nidulans (strain FGSC A4 / ATCC 38163 / CBS 112.46 / NRRL 194 / M139) (Aspergillus nidulans)).